Consider the following 556-residue polypeptide: uncharacterized protein (556 aa).

Disordered regions lie at residues 1–40 (MSNS…TNEN), 80–243 (NTTQ…KQSW), 278–324 (YDSD…SSLP), 363–391 (RTKQ…KFVD), and 422–525 (DSKQ…ENSA). Over residues 7–25 (NNNNNTNNNNNNNNNNNGN) the composition is skewed to low complexity. Residues 30–40 (EEPDDDSTNEN) show a composition bias toward acidic residues. 2 stretches are compositionally biased toward low complexity: residues 80–133 (NTTQ…GTRS) and 164–181 (NDNN…NDSN). Residues 182–192 (IVDDDEDEEEF) show a composition bias toward acidic residues. Over residues 207-226 (STSSPSSTSSPIVSPQTQTS) the composition is skewed to low complexity. Positions 227–243 (KLESSMDVSPSSGKQSW) are enriched in polar residues. Low complexity-rich tracts occupy residues 292 to 322 (NNSS…NSSS), 369 to 388 (KVQQ…NNNK), and 425 to 525 (QQNV…ENSA). The chain crosses the membrane as a helical span at residues 528 to 548 (GSFIKNAVIFIFILLLMVVGF).

It localises to the membrane. This is an uncharacterized protein from Dictyostelium discoideum (Social amoeba).